A 106-amino-acid polypeptide reads, in one-letter code: Ferredoxin (106 aa).

2 residues coordinate [3Fe-4S] cluster: Cys-9 and Cys-17. Residues Cys-21, Cys-40, Cys-43, and Cys-46 each coordinate [4Fe-4S] cluster. The 4Fe-4S ferredoxin-type domain occupies 31-60 (RMLYIHPDECVDCGACEPVCPVEAIYYEDD). Cys-50 is a binding site for [3Fe-4S] cluster. The tract at residues 84 to 106 (GAAKVGKVDRDVEPVSSLPPQGE) is disordered.

[4Fe-4S] cluster serves as cofactor. [3Fe-4S] cluster is required as a cofactor.

Its function is as follows. Ferredoxins are iron-sulfur proteins that transfer electrons in a wide variety of metabolic reactions. This chain is Ferredoxin (fdxA), found in Saccharopolyspora erythraea (Streptomyces erythraeus).